The sequence spans 32 residues: Phospholipase A2 (32 aa).

Tyrosine 16, glycine 18, and glycine 20 together coordinate Ca(2+).

Ca(2+) is required as a cofactor. As to expression, expressed by the venom gland.

It localises to the secreted. It catalyses the reaction a 1,2-diacyl-sn-glycero-3-phosphocholine + H2O = a 1-acyl-sn-glycero-3-phosphocholine + a fatty acid + H(+). PLA2 catalyzes the calcium-dependent hydrolysis of the 2-acyl groups in 3-sn-phosphoglycerides. This chain is Phospholipase A2, found in Micrurus lemniscatus (South American coral snake).